Here is a 385-residue protein sequence, read N- to C-terminus: tRNA (guanine-N(7)-)-methyltransferase non-catalytic subunit wuho (385 aa).

WD repeat units follow at residues 68–108, 155–194, and 198–236; these read KVEV…AKLL, GHLS…DIHS, and GHKE…ELLH.

This sequence belongs to the WD repeat TRM82 family. Forms a heterodimer with the catalytic subunit Mettl1. Interacts with mei-P26 and weakly interacts with bgcn; required for the function or formation of the mei-P26-bgcn-bam-sxl complex. Interacts with nanos; may be involved in mei-P26-dependent derepression of the BMP signaling pathway. Interacts with Myc; the interaction may be mediated by mei-P26 and may be involved in the regulation of ribosome biogenesis. In terms of tissue distribution, in testis, it is present at high level in hub cells, a niche for germline stem cells of testis. Ubiquitously expressed in all testicular cells throughout spermatogenesis. Ubiquitously expressed in all germline and somatic cells of the ovary.

The protein resides in the nucleus. It localises to the cytoplasm. It functions in the pathway tRNA modification; N(7)-methylguanine-tRNA biosynthesis. Required for the Mettl1-dependent formation of N(7)-methylguanine at position 46 (m7G46) in tRNA. In the Mettl1-wuho methyltransferase complex, it is required to stabilize and induce conformational changes of the catalytic subunit. Required for binding of nanos mRNA and repression of translation by the mei-P26-bgcn-bam-sxl complex. May cooperate with mei-P26 and nanos to derepress the BMP signaling pathway. May cooperate with mei-P26 to suppress expression of a subset of microRNAs. May cooperate with mei-P26 to regulate bam expression levels in germline cells during gametogenesis. Required to promote mitosis to meiosis transition during gametogenesis. May regulate germline cell division in part by regulating ribosome biogenesis. This is tRNA (guanine-N(7)-)-methyltransferase non-catalytic subunit wuho from Drosophila grimshawi (Hawaiian fruit fly).